The chain runs to 290 residues: Zinc finger matrin-type protein 3 (290 aa).

2 Matrin-type zinc fingers span residues 70–100 (LFCK…KLRN) and 148–178 (DYCK…RLRL). Disordered regions lie at residues 182–203 (QSHS…EGSE) and 266–290 (ESKQ…GYVQ). Residues 246 to 276 (FYCSMCNVGAGEEVEFRQHLESKQHKSKVSE) form a Matrin-type 3 zinc finger. Residues 266-283 (ESKQHKSKVSEQRYRSEM) show a composition bias toward basic and acidic residues.

Interacts with dsRNA. Constitutively expressed in brain and testis. Also expressed in lung, kidney and spleen after whole body gamma irradiation.

The protein localises to the nucleus. It is found in the nucleolus. Acts as a bona fide target gene of p53/TP53. May play a role in the TP53-dependent growth regulatory pathway. May contribute to TP53-mediated apoptosis by regulation of TP53 expression and translocation to the nucleus and nucleolus. This chain is Zinc finger matrin-type protein 3, found in Mus musculus (Mouse).